The primary structure comprises 705 residues: Polyribonucleotide nucleotidyltransferase (705 aa).

Residues Asp486 and Asp492 each contribute to the Mg(2+) site. A KH domain is found at 553 to 612 (PRIIKFKINPEKIRDVIGKGGAVIRALTEETGTTIDISDDGSVTIASISNEGGEQAKRRI). The S1 motif domain maps to 622 to 690 (GKIYEGTVLK…DKGRLRLSMK (69 aa)).

This sequence belongs to the polyribonucleotide nucleotidyltransferase family. Mg(2+) serves as cofactor.

It is found in the cytoplasm. The enzyme catalyses RNA(n+1) + phosphate = RNA(n) + a ribonucleoside 5'-diphosphate. Its function is as follows. Involved in mRNA degradation. Catalyzes the phosphorolysis of single-stranded polyribonucleotides processively in the 3'- to 5'-direction. The protein is Polyribonucleotide nucleotidyltransferase of Nitrosomonas eutropha (strain DSM 101675 / C91 / Nm57).